A 199-amino-acid chain; its full sequence is UPF0301 protein Rfer_1377 (199 aa).

Belongs to the UPF0301 (AlgH) family.

This chain is UPF0301 protein Rfer_1377, found in Albidiferax ferrireducens (strain ATCC BAA-621 / DSM 15236 / T118) (Rhodoferax ferrireducens).